The following is a 121-amino-acid chain: Large ribosomal subunit protein bL12 (121 aa).

It belongs to the bacterial ribosomal protein bL12 family. In terms of assembly, homodimer. Part of the ribosomal stalk of the 50S ribosomal subunit. Forms a multimeric L10(L12)X complex, where L10 forms an elongated spine to which 2 to 4 L12 dimers bind in a sequential fashion. Binds GTP-bound translation factors.

Forms part of the ribosomal stalk which helps the ribosome interact with GTP-bound translation factors. Is thus essential for accurate translation. This is Large ribosomal subunit protein bL12 from Pseudomonas fluorescens (strain SBW25).